A 240-amino-acid polypeptide reads, in one-letter code: Fibronectin type III domain-containing protein 5 (240 aa).

Residues 1–10 (MQAARGGAGR) show a composition bias toward gly residues. The disordered stretch occupies residues 1–33 (MQAARGGAGRPGREGRGLERECERSPGPGVAMP). The segment covering 11–24 (PGREGRGLERECER) has biased composition (basic and acidic residues). The region spanning 64–155 (APVNVTVRHL…EPVLFKTPRE (92 aa)) is the Fibronectin type-III domain. N-linked (GlcNAc...) asparagine glycans are attached at residues Asn-67 and Asn-112. The helical transmembrane segment at 181–201 (GEVLIIVVVLFMWAGVIALFC) threads the bilayer. Over residues 210–221 (NEPNNNKEKTKS) the composition is skewed to basic and acidic residues. The interval 210-240 (NEPNNNKEKTKSASETSTPEHQGGGLLRSKI) is disordered. A compositionally biased stretch (gly residues) spans 231–240 (QGGGLLRSKI). A Microbody targeting signal motif is present at residues 238-240 (SKI).

As to quaternary structure, dimer; may exist in other oligomeric forms. In terms of processing, the extracellular domain is cleaved and released from the cell membrane. Post-translationally, N-Glycosylated. As to expression, in adult, it is highly expressed in skeletal muscle, heart and brain.

It localises to the cell membrane. The protein localises to the peroxisome membrane. It is found in the secreted. Mediates beneficial effects of muscular exercise. Induces browning of white adipose tissue by stimulating UCP1 expression, at least in part, via the nuclear receptor PPARA. This Mus musculus (Mouse) protein is Fibronectin type III domain-containing protein 5 (Fndc5).